The sequence spans 374 residues: Phosphate acyltransferase (374 aa).

A disordered region spans residues Ala323–Pro374. A compositionally biased stretch (basic and acidic residues) spans Val326–Pro335.

This sequence belongs to the PlsX family. In terms of assembly, homodimer. Probably interacts with PlsY.

The protein resides in the cytoplasm. It carries out the reaction a fatty acyl-[ACP] + phosphate = an acyl phosphate + holo-[ACP]. It participates in lipid metabolism; phospholipid metabolism. Its function is as follows. Catalyzes the reversible formation of acyl-phosphate (acyl-PO(4)) from acyl-[acyl-carrier-protein] (acyl-ACP). This enzyme utilizes acyl-ACP as fatty acyl donor, but not acyl-CoA. The polypeptide is Phosphate acyltransferase (Synechococcus sp. (strain JA-2-3B'a(2-13)) (Cyanobacteria bacterium Yellowstone B-Prime)).